The following is a 444-amino-acid chain: Tubulin beta-7 chain (444 aa).

Positions 11, 69, 138, 142, 143, 144, 204, and 226 each coordinate GTP. Residue Glu69 participates in Mg(2+) binding.

It belongs to the tubulin family. Dimer of alpha and beta chains. A typical microtubule is a hollow water-filled tube with an outer diameter of 25 nm and an inner diameter of 15 nM. Alpha-beta heterodimers associate head-to-tail to form protofilaments running lengthwise along the microtubule wall with the beta-tubulin subunit facing the microtubule plus end conferring a structural polarity. Microtubules usually have 13 protofilaments but different protofilament numbers can be found in some organisms and specialized cells. It depends on Mg(2+) as a cofactor.

The protein resides in the cytoplasm. It localises to the cytoskeleton. In terms of biological role, tubulin is the major constituent of microtubules, a cylinder consisting of laterally associated linear protofilaments composed of alpha- and beta-tubulin heterodimers. Microtubules grow by the addition of GTP-tubulin dimers to the microtubule end, where a stabilizing cap forms. Below the cap, tubulin dimers are in GDP-bound state, owing to GTPase activity of alpha-tubulin. The chain is Tubulin beta-7 chain from Gossypium hirsutum (Upland cotton).